We begin with the raw amino-acid sequence, 178 residues long: Acireductone dioxygenase (178 aa).

Residues histidine 100, histidine 102, glutamate 106, and histidine 145 each contribute to the Fe(2+) site. 4 residues coordinate Ni(2+): histidine 100, histidine 102, glutamate 106, and histidine 145.

This sequence belongs to the acireductone dioxygenase (ARD) family. Monomer. Requires Fe(2+) as cofactor. Ni(2+) serves as cofactor.

The enzyme catalyses 1,2-dihydroxy-5-(methylsulfanyl)pent-1-en-3-one + O2 = 3-(methylsulfanyl)propanoate + CO + formate + 2 H(+). It carries out the reaction 1,2-dihydroxy-5-(methylsulfanyl)pent-1-en-3-one + O2 = 4-methylsulfanyl-2-oxobutanoate + formate + 2 H(+). It functions in the pathway amino-acid biosynthesis; L-methionine biosynthesis via salvage pathway; L-methionine from S-methyl-5-thio-alpha-D-ribose 1-phosphate: step 5/6. Catalyzes 2 different reactions between oxygen and the acireductone 1,2-dihydroxy-3-keto-5-methylthiopentene (DHK-MTPene) depending upon the metal bound in the active site. Fe-containing acireductone dioxygenase (Fe-ARD) produces formate and 2-keto-4-methylthiobutyrate (KMTB), the alpha-ketoacid precursor of methionine in the methionine recycle pathway. Ni-containing acireductone dioxygenase (Ni-ARD) produces methylthiopropionate, carbon monoxide and formate, and does not lie on the methionine recycle pathway. This chain is Acireductone dioxygenase, found in Bacillus velezensis (strain DSM 23117 / BGSC 10A6 / LMG 26770 / FZB42) (Bacillus amyloliquefaciens subsp. plantarum).